A 281-amino-acid chain; its full sequence is uncharacterized protein (281 aa).

Its subcellular location is the plastid. It localises to the chloroplast. This is an uncharacterized protein from Euglena gracilis.